Reading from the N-terminus, the 128-residue chain is UPF0102 protein PSPTO_4420 (128 aa).

The protein belongs to the UPF0102 family.

The chain is UPF0102 protein PSPTO_4420 from Pseudomonas syringae pv. tomato (strain ATCC BAA-871 / DC3000).